The following is a 430-amino-acid chain: Endochitinase 46 (430 aa).

The N-terminal stretch at methionine 1–alanine 22 is a signal peptide. Positions serine 23–arginine 35 are excised as a propeptide. The GH18 domain maps to tyrosine 39–leucine 408. Chitin is bound by residues glycine 103 to threonine 104 and glycine 130 to threonine 133. The active-site Proton donor is glutamate 172. Tyrosine 173 contacts chitin. An N-linked (GlcNAc...) asparagine glycan is attached at asparagine 219. Residues methionine 238 to aspartate 241 and tryptophan 385 each bind chitin.

It belongs to the glycosyl hydrolase 18 family. Chitinase class V subfamily.

Its subcellular location is the secreted. The catalysed reaction is Random endo-hydrolysis of N-acetyl-beta-D-glucosaminide (1-&gt;4)-beta-linkages in chitin and chitodextrins.. In terms of biological role, secreted chitinase involved in the degradation of chitin, a component of the cell walls of fungi and exoskeletal elements of some animals (including worms and arthropods). Plays a morphogenetic role during apical growth, cell division and differentiation (cell wall morphogenesis). Also acts as an antifungal agent. Involved in the degradation and further assimilation of phytopathogenic fungi, namely mycoparasitism, the major mechanism accounting for the antagonistic activity against phytopathogenic fungi displayed by Trichoderma. The sequence is that of Endochitinase 46 (chit46) from Trichoderma harzianum (Hypocrea lixii).